The chain runs to 203 residues: E3 ubiquitin-protein ligase RNF152 (203 aa).

The segment at 12-55 (CQICFNYYSPRRRPKLLDCKHTCCSVCLQQMRTSQKDLRCPWCR) adopts an RING-type zinc-finger fold. A helical membrane pass occupies residues 167 to 187 (SGVCTVILVACVLVFLLGIVL).

This sequence belongs to the RNF152 family.

It is found in the lysosome membrane. The catalysed reaction is S-ubiquitinyl-[E2 ubiquitin-conjugating enzyme]-L-cysteine + [acceptor protein]-L-lysine = [E2 ubiquitin-conjugating enzyme]-L-cysteine + N(6)-ubiquitinyl-[acceptor protein]-L-lysine.. It functions in the pathway protein modification; protein ubiquitination. Its function is as follows. E3 ubiquitin-protein ligase that acts as a negative regulator of mTORC1 signaling by mediating ubiquitination of RagA/RRAGA and RHEB. Catalyzes 'Lys-63'-linked polyubiquitination of RagA/RRAGA in response to amino acid starvation, thereby regulating mTORC1 signaling. Also mediates monoubiquitination of RHEB, promoting its association with the TSC-TBC complex and subsequent inhibition. Also mediates 'Lys-48'-linked polyubiquitination of target proteins and their subsequent targeting to the proteasome for degradation. In Gallus gallus (Chicken), this protein is E3 ubiquitin-protein ligase RNF152.